Consider the following 217-residue polypeptide: MNQMMTFLQTNGGELLYKTGEHLYISLIAVVLGIIVAVPLGVALTRMKKGAGAVIGFVNIVQTLPSLAILAFFIPLLGVGKVPAIVALFFYSVLPILRNTYTGIKGVNKNLLESGKGIGMTGWEQIRLVEIPLAIPIIMAGIRTSTIYLIGWATLASFIGGGGLGDYIFIGLNLYQPEYIIGGAVPVTILAIIIDYVLAVTERKVTPKGLQGMKEVS.

One can recognise an ABC transmembrane type-1 domain in the interval 19 to 198 (TGEHLYISLI…ILAIIIDYVL (180 aa)). 6 helical membrane passes run 23-43 (LYIS…LGVA), 52-74 (GAVI…AFFI), 84-101 (AIVA…RNTY), 128-148 (LVEI…STIY), 150-170 (IGWA…YIFI), and 180-200 (IIGG…VLAV).

It belongs to the binding-protein-dependent transport system permease family. CysTW subfamily. The complex is composed of two ATP-binding proteins (OpuCA), two transmembrane proteins (OpuCB and OpuCD) and a solute-binding protein (OpuCC).

The protein resides in the cell membrane. Its function is as follows. Involved in a high affinity multicomponent binding-protein-dependent transport system for glycine betaine, carnitine and choline; probably responsible for the translocation of the substrate across the membrane. The sequence is that of Glycine betaine/carnitine/choline transport system permease protein OpuCB (opuCB) from Bacillus subtilis (strain 168).